The following is a 209-amino-acid chain: Uracil phosphoribosyltransferase (209 aa).

Residues Arg79, Arg104, and 131–139 (TPVVATANT) each bind 5-phospho-alpha-D-ribose 1-diphosphate. Uracil-binding positions include Ile194 and 199-201 (GDA). Asp200 is a binding site for 5-phospho-alpha-D-ribose 1-diphosphate.

This sequence belongs to the UPRTase family. Mg(2+) serves as cofactor.

The enzyme catalyses UMP + diphosphate = 5-phospho-alpha-D-ribose 1-diphosphate + uracil. Its pathway is pyrimidine metabolism; UMP biosynthesis via salvage pathway; UMP from uracil: step 1/1. Its activity is regulated as follows. Allosterically activated by GTP. Functionally, catalyzes the conversion of uracil and 5-phospho-alpha-D-ribose 1-diphosphate (PRPP) to UMP and diphosphate. The polypeptide is Uracil phosphoribosyltransferase (Bradyrhizobium diazoefficiens (strain JCM 10833 / BCRC 13528 / IAM 13628 / NBRC 14792 / USDA 110)).